The following is a 277-amino-acid chain: Undecaprenyl-diphosphatase 1 (277 aa).

The next 8 helical transmembrane spans lie at 1–21 (MSLL…FLPI), 39–58 (AGFS…VILY), 85–105 (FWFA…GILF), 113–133 (FKAP…LIII), 147–167 (MTIW…IPGL), 191–211 (SFLL…DDLI), 226–246 (ASFV…LNLV), and 251–271 (LVYF…FQDA).

This sequence belongs to the UppP family.

The protein localises to the cell membrane. The enzyme catalyses di-trans,octa-cis-undecaprenyl diphosphate + H2O = di-trans,octa-cis-undecaprenyl phosphate + phosphate + H(+). In terms of biological role, catalyzes the dephosphorylation of undecaprenyl diphosphate (UPP). Confers resistance to bacitracin. In Shouchella clausii (strain KSM-K16) (Alkalihalobacillus clausii), this protein is Undecaprenyl-diphosphatase 1.